We begin with the raw amino-acid sequence, 216 residues long: MTKLTARQQQVFDLIRRAIERTGFPPTRAEIAAELGFSSANSAEEHLRALARKGVIELAAGASRGIRLLAGPEDSPHQFTLPHASIMQLSLPLIGRVAAGSPILAQEHISQHYACDPALFSSKPDYLLKVRGLSMRDAGIFDGDLLAVQKKSEAKDGQIVIARLGDDVTVKRLKRRPNGLELIAENPDYENIFVETGSAEFALEGIAVGLIRPGEF.

Residues 28–48 (RAEIAAELGFSSANSAEEHLR) constitute a DNA-binding region (H-T-H motif). Active-site for autocatalytic cleavage activity residues include S134 and K171.

It belongs to the peptidase S24 family. Homodimer.

It carries out the reaction Hydrolysis of Ala-|-Gly bond in repressor LexA.. Its function is as follows. Represses a number of genes involved in the response to DNA damage (SOS response), including recA and lexA. In the presence of single-stranded DNA, RecA interacts with LexA causing an autocatalytic cleavage which disrupts the DNA-binding part of LexA, leading to derepression of the SOS regulon and eventually DNA repair. This Paraburkholderia xenovorans (strain LB400) protein is LexA repressor.